The sequence spans 905 residues: Gamma-tubulin complex component 2 (905 aa).

The residue at position 83 (Tyr-83) is a Phosphotyrosine. The interval 877–905 (AERSQKAAPQVPVPRGPSAPAPRVAIPAQ) is disordered. The segment covering 887 to 896 (VPVPRGPSAP) has biased composition (pro residues).

The protein belongs to the TUBGCP family. As to quaternary structure, component of the gamma-tubulin ring complex (gTuRC) consisting of TUBGCP2, TUBGCP3, TUBGCP4, TUBGCP5 and TUBGCP6 and gamma-tubulin TUBG1 or TUBG2. TUBGCP2, TUBGCP3, TUBGCP4, TUBGCP5 and TUBGCP6 assemble in a 5:5:2:1:1 stoichiometry; each is associated with a gamma-tubulin, thereby arranging 14 gamma-tubulins in a helical manner. Gamma-tubulin at the first position is blocked by TUBGCP3 at the last position, allowing 13 protafilaments to grow into a microtubule. The gTuRC (via TUBGCP3 and TUBGCP6) interacts with ACTB and MZT1; the interactions form a luminal bridge that stabilizes the initial structure during complex assembly. The gTuRC (via TUBGCP2) interacts with MZT2A/MZT2B and CDK5RAP2 (via CM1 motif); the interactions play a role in gTuRC activation. Interacts with ATF5; the ATF5:PCNT:polyglutamylated tubulin (PGT) tripartite unites the mother centriole and the pericentriolar material (PCM) in the centrosome.

The protein resides in the cytoplasm. It is found in the cytoskeleton. Its subcellular location is the microtubule organizing center. The protein localises to the centrosome. Functionally, component of the gamma-tubulin ring complex (gTuRC) which mediates microtubule nucleation. The gTuRC regulates the minus-end nucleation of alpha-beta tubulin heterodimers that grow into microtubule protafilaments, a critical step in centrosome duplication and spindle formation. Plays a role in neuronal migration. The sequence is that of Gamma-tubulin complex component 2 (Tubgcp2) from Mus musculus (Mouse).